Consider the following 413-residue polypeptide: Multifunctional CCA protein (413 aa).

ATP contacts are provided by Gly-8 and Arg-11. CTP-binding residues include Gly-8 and Arg-11. Mg(2+) contacts are provided by Asp-21 and Asp-23. Residues Arg-91, Arg-137, and Arg-140 each contribute to the ATP site. 3 residues coordinate CTP: Arg-91, Arg-137, and Arg-140. In terms of domain architecture, HD spans 228 to 329 (TGVHTLMTLS…VKLFDAIDAW (102 aa)).

The protein belongs to the tRNA nucleotidyltransferase/poly(A) polymerase family. Bacterial CCA-adding enzyme type 1 subfamily. Monomer. Can also form homodimers and oligomers. Mg(2+) is required as a cofactor. Requires Ni(2+) as cofactor.

The enzyme catalyses a tRNA precursor + 2 CTP + ATP = a tRNA with a 3' CCA end + 3 diphosphate. The catalysed reaction is a tRNA with a 3' CCA end + 2 CTP + ATP = a tRNA with a 3' CCACCA end + 3 diphosphate. Its function is as follows. Catalyzes the addition and repair of the essential 3'-terminal CCA sequence in tRNAs without using a nucleic acid template. Adds these three nucleotides in the order of C, C, and A to the tRNA nucleotide-73, using CTP and ATP as substrates and producing inorganic pyrophosphate. tRNA 3'-terminal CCA addition is required both for tRNA processing and repair. Also involved in tRNA surveillance by mediating tandem CCA addition to generate a CCACCA at the 3' terminus of unstable tRNAs. While stable tRNAs receive only 3'-terminal CCA, unstable tRNAs are marked with CCACCA and rapidly degraded. The chain is Multifunctional CCA protein from Salmonella choleraesuis (strain SC-B67).